Reading from the N-terminus, the 240-residue chain is Lactate utilization protein C (240 aa).

The protein belongs to the LutC/YkgG family.

Is involved in L-lactate degradation and allows cells to grow with lactate as the sole carbon source. The polypeptide is Lactate utilization protein C (Geobacillus thermodenitrificans (strain NG80-2)).